Consider the following 622-residue polypeptide: Low affinity potassium transport system protein Kup (622 aa).

12 helical membrane-spanning segments follow: residues 9–29, 49–69, 103–123, 137–157, 165–185, 213–233, 247–267, 276–296, 337–357, 363–383, 396–416, and 419–439; these read LPAI…TSPL, VFGF…IKYL, VIMG…TPAI, PQLD…LFMI, VGKL…GLGL, VSFI…ALYA, WFTV…ALLL, PFFL…AALA, IYIP…IVSF, LAAA…ILST, FVAL…TANL, and LLSG…VMTT.

It belongs to the HAK/KUP transporter (TC 2.A.72) family.

It is found in the cell inner membrane. It carries out the reaction K(+)(in) + H(+)(in) = K(+)(out) + H(+)(out). Functionally, responsible for the low-affinity transport of potassium into the cell. Likely operates as a K(+):H(+) symporter. This chain is Low affinity potassium transport system protein Kup, found in Shigella boydii serotype 18 (strain CDC 3083-94 / BS512).